Consider the following 84-residue polypeptide: Beta-cardiotoxin CTX27 (84 aa).

The first 21 residues, 1 to 21, serve as a signal peptide directing secretion; sequence MKTLLLTLVVVTIVCLDLGYT. Cystine bridges form between C24–C43, C36–C61, C65–C76, and C77–C82.

It belongs to the three-finger toxin family. Short-chain subfamily. Aminergic toxin sub-subfamily. In terms of tissue distribution, expressed by the venom gland.

It is found in the secreted. Its function is as follows. Acts as a beta-blocker by binding to beta-1 and beta-2 adrenergic receptors (ADRB1 and ADRB2). It dose-dependently decreases the heart rate (bradycardia), whereas conventional cardiotoxins increases it. At 100 mg/kg, intraperitoneal injection into mice provokes labored breathing, impaired locomotion, lack of response to external stimuli, and death (after 30 minutes). The chain is Beta-cardiotoxin CTX27 from Ophiophagus hannah (King cobra).